A 176-amino-acid chain; its full sequence is Shikimate kinase (176 aa).

G12–T17 is a binding site for ATP. Mg(2+) is bound at residue S16. Residues D34, R58, and G80 each coordinate substrate. R117 serves as a coordination point for ATP. R136 lines the substrate pocket. R153 is an ATP binding site.

This sequence belongs to the shikimate kinase family. In terms of assembly, monomer. Mg(2+) serves as cofactor.

Its subcellular location is the cytoplasm. It carries out the reaction shikimate + ATP = 3-phosphoshikimate + ADP + H(+). It participates in metabolic intermediate biosynthesis; chorismate biosynthesis; chorismate from D-erythrose 4-phosphate and phosphoenolpyruvate: step 5/7. Functionally, catalyzes the specific phosphorylation of the 3-hydroxyl group of shikimic acid using ATP as a cosubstrate. This is Shikimate kinase from Mycobacterium bovis (strain ATCC BAA-935 / AF2122/97).